The following is a 97-amino-acid chain: Small ribosomal subunit protein bS16c (97 aa).

Belongs to the bacterial ribosomal protein bS16 family.

The protein resides in the plastid. Its subcellular location is the chloroplast. The protein is Small ribosomal subunit protein bS16c of Piper cenocladum (Ant piper).